A 230-amino-acid polypeptide reads, in one-letter code: Orotidine 5'-phosphate decarboxylase (230 aa).

Substrate-binding positions include Asp11, Lys34, 61-70 (DLKLHDIPNT), Thr117, Arg179, Gln188, Gly208, and Arg209. The active-site Proton donor is the Lys63.

This sequence belongs to the OMP decarboxylase family. Type 1 subfamily. In terms of assembly, homodimer.

It carries out the reaction orotidine 5'-phosphate + H(+) = UMP + CO2. Its pathway is pyrimidine metabolism; UMP biosynthesis via de novo pathway; UMP from orotate: step 2/2. Functionally, catalyzes the decarboxylation of orotidine 5'-monophosphate (OMP) to uridine 5'-monophosphate (UMP). In Streptococcus equi subsp. zooepidemicus (strain H70), this protein is Orotidine 5'-phosphate decarboxylase.